The primary structure comprises 359 residues: Fe-S cluster assembly protein DRE2 (359 aa).

Positions 1–159 (MANILLLLHP…LFKKLSSNSN (159 aa)) are N-terminal SAM-like domain. The tract at residues 152 to 187 (KKLSSNSNNNNNSSSPIGLTDSSAANTDEETDEANV) is disordered. Residues 155–166 (SSNSNNNNNSSS) show a composition bias toward low complexity. The linker stretch occupies residues 159-228 (NNNNNSSSPI…DDLIKDSNQL (70 aa)). The span at 167-177 (PIGLTDSSAAN) shows a compositional bias: polar residues. Residues cysteine 240, cysteine 252, cysteine 255, and cysteine 257 each coordinate [2Fe-2S] cluster. The interval 240-257 (CEIPNGKKRRKACKDCTC) is fe-S binding site A. Residues cysteine 322, cysteine 325, cysteine 333, and cysteine 336 each contribute to the [4Fe-4S] cluster site. 2 short sequence motifs (cx2C motif) span residues 322 to 325 (CGSC) and 333 to 336 (CDGC). Residues 322 to 336 (CGSCALGDAFRCDGC) are fe-S binding site B.

This sequence belongs to the anamorsin family. Monomer. Interacts with TAH18. Interacts with MIA40. It depends on [2Fe-2S] cluster as a cofactor. [4Fe-4S] cluster is required as a cofactor.

The protein resides in the cytoplasm. It localises to the mitochondrion intermembrane space. In terms of biological role, component of the cytosolic iron-sulfur (Fe-S) protein assembly (CIA) machinery required for the maturation of extramitochondrial Fe-S proteins. Part of an electron transfer chain functioning in an early step of cytosolic Fe-S biogenesis, facilitating the de novo assembly of a [4Fe-4S] cluster on the scaffold complex CFD1-NBP35. Electrons are transferred to DRE2 from NADPH via the FAD- and FMN-containing protein TAH18. TAH18-DRE2 are also required for the assembly of the diferric tyrosyl radical cofactor of ribonucleotide reductase (RNR), probably by providing electrons for reduction during radical cofactor maturation in the catalytic small subunit RNR2. In Scheffersomyces stipitis (strain ATCC 58785 / CBS 6054 / NBRC 10063 / NRRL Y-11545) (Yeast), this protein is Fe-S cluster assembly protein DRE2.